Here is a 101-residue protein sequence, read N- to C-terminus: Small ribosomal subunit protein uS14 (101 aa).

Over residues 1 to 10 (MAKKSSIEKN) the composition is skewed to basic and acidic residues. Residues 1 to 23 (MAKKSSIEKNNRRRRMNRNAAAK) are disordered. A compositionally biased stretch (basic residues) spans 11 to 23 (NRRRRMNRNAAAK).

Belongs to the universal ribosomal protein uS14 family. Part of the 30S ribosomal subunit. Contacts proteins S3 and S10.

Functionally, binds 16S rRNA, required for the assembly of 30S particles and may also be responsible for determining the conformation of the 16S rRNA at the A site. In Nitrobacter winogradskyi (strain ATCC 25391 / DSM 10237 / CIP 104748 / NCIMB 11846 / Nb-255), this protein is Small ribosomal subunit protein uS14.